The sequence spans 259 residues: 5'-nucleotidase SurE (259 aa).

Positions 8, 9, 40, and 92 each coordinate a divalent metal cation.

Belongs to the SurE nucleotidase family. It depends on a divalent metal cation as a cofactor.

The protein localises to the cytoplasm. It catalyses the reaction a ribonucleoside 5'-phosphate + H2O = a ribonucleoside + phosphate. Its function is as follows. Nucleotidase that shows phosphatase activity on nucleoside 5'-monophosphates. In Xanthomonas campestris pv. campestris (strain 8004), this protein is 5'-nucleotidase SurE.